The sequence spans 376 residues: Lipoyl synthase, mitochondrial (376 aa).

Residues Cys-102, Cys-107, Cys-113, Cys-133, Cys-137, Cys-140, and Ser-348 each contribute to the [4Fe-4S] cluster site. A Radical SAM core domain is found at 116–337 (GGEDKTATAT…EEVGGEMGFA (222 aa)).

Belongs to the radical SAM superfamily. Lipoyl synthase family. It depends on [4Fe-4S] cluster as a cofactor.

It localises to the mitochondrion. The catalysed reaction is [[Fe-S] cluster scaffold protein carrying a second [4Fe-4S](2+) cluster] + N(6)-octanoyl-L-lysyl-[protein] + 2 oxidized [2Fe-2S]-[ferredoxin] + 2 S-adenosyl-L-methionine + 4 H(+) = [[Fe-S] cluster scaffold protein] + N(6)-[(R)-dihydrolipoyl]-L-lysyl-[protein] + 4 Fe(3+) + 2 hydrogen sulfide + 2 5'-deoxyadenosine + 2 L-methionine + 2 reduced [2Fe-2S]-[ferredoxin]. The protein operates within protein modification; protein lipoylation via endogenous pathway; protein N(6)-(lipoyl)lysine from octanoyl-[acyl-carrier-protein]: step 2/2. Functionally, catalyzes the radical-mediated insertion of two sulfur atoms into the C-6 and C-8 positions of the octanoyl moiety bound to the lipoyl domains of lipoate-dependent enzymes, thereby converting the octanoylated domains into lipoylated derivatives. The chain is Lipoyl synthase, mitochondrial from Branchiostoma floridae (Florida lancelet).